The chain runs to 320 residues: Malate dehydrogenase (320 aa).

Residues 10–15 (GAGQIG) and aspartate 34 each bind NAD(+). 2 residues coordinate substrate: arginine 83 and arginine 89. Residues asparagine 96 and 119–121 (ITN) each bind NAD(+). Residues asparagine 121 and arginine 152 each coordinate substrate. Catalysis depends on histidine 176, which acts as the Proton acceptor.

This sequence belongs to the LDH/MDH superfamily. MDH type 3 family.

The enzyme catalyses (S)-malate + NAD(+) = oxaloacetate + NADH + H(+). Catalyzes the reversible oxidation of malate to oxaloacetate. This is Malate dehydrogenase from Jannaschia sp. (strain CCS1).